A 375-amino-acid chain; its full sequence is tRNA/tmRNA (uracil-C(5))-methyltransferase (375 aa).

S-adenosyl-L-methionine is bound by residues glutamine 197, tyrosine 225, asparagine 230, glutamate 246, and aspartate 306. Cysteine 331 serves as the catalytic Nucleophile. The active-site Proton acceptor is the glutamate 365.

This sequence belongs to the class I-like SAM-binding methyltransferase superfamily. RNA M5U methyltransferase family. TrmA subfamily.

The catalysed reaction is uridine(54) in tRNA + S-adenosyl-L-methionine = 5-methyluridine(54) in tRNA + S-adenosyl-L-homocysteine + H(+). It catalyses the reaction uridine(341) in tmRNA + S-adenosyl-L-methionine = 5-methyluridine(341) in tmRNA + S-adenosyl-L-homocysteine + H(+). In terms of biological role, dual-specificity methyltransferase that catalyzes the formation of 5-methyluridine at position 54 (m5U54) in all tRNAs, and that of position 341 (m5U341) in tmRNA (transfer-mRNA). The sequence is that of tRNA/tmRNA (uracil-C(5))-methyltransferase from Aliarcobacter butzleri (strain RM4018) (Arcobacter butzleri).